Here is a 468-residue protein sequence, read N- to C-terminus: Secreted triacylglycerol lipase LIP7 (468 aa).

Positions 1–21 (MFPRQILVFAALGLCFALVAG) are cleaved as a signal peptide. Cys125 and Cys295 are disulfide-bonded. Ser209 acts as the Nucleophile in catalysis. Residues Asp355 and His389 contribute to the active site.

Belongs to the AB hydrolase superfamily. Lipase family. Class Lip subfamily.

The protein localises to the secreted. It localises to the cell wall. The enzyme catalyses a triacylglycerol + H2O = a diacylglycerol + a fatty acid + H(+). It catalyses the reaction a monoacylglycerol + H2O = glycerol + a fatty acid + H(+). The catalysed reaction is a diacylglycerol + H2O = a monoacylglycerol + a fatty acid + H(+). In terms of biological role, secreted lipase involved in Dandruff and seborrheic dermatitis (D/SD) probably via lipase-mediated breakdown of sebaceous lipids and release of irritating free fatty acids. Has triacylglycerol lipase activity and is able to hydrolyze triolein. Mostly converts monoolein to di- and triolein, while free fatty acids are only produced in low amounts. The protein is Secreted triacylglycerol lipase LIP7 of Malassezia globosa (strain ATCC MYA-4612 / CBS 7966) (Dandruff-associated fungus).